Consider the following 940-residue polypeptide: Translation initiation factor IF-2 (940 aa).

4 disordered regions span residues 116-137 (PEQE…SSDT), 151-196 (EVEA…EQRS), 210-294 (AVRK…VKKV), and 318-346 (HSAP…VANR). A compositionally biased stretch (polar residues) spans 121-137 (LESTSVAEIPESVSSDT). The span at 159–180 (PEPEVEATPEPEVEDVVAEEAE) shows a compositional bias: acidic residues. A compositionally biased stretch (low complexity) spans 181–193 (PAAAEPAPAPVVE). A compositionally biased stretch (basic and acidic residues) spans 213–239 (KKAEEEAEVARRKADAEKAEAAAKQKA). The segment covering 282-294 (KHNKKAGKAVKKV) has biased composition (basic residues). The segment covering 326–337 (GGQNNNSSNSGS) has biased composition (low complexity). The tr-type G domain occupies 441–610 (ARAPVVTVMG…ALQAELLELS (170 aa)). The tract at residues 450–457 (GHVDHGKT) is G1. 450 to 457 (GHVDHGKT) is a GTP binding site. A G2 region spans residues 475–479 (GITQH). The tract at residues 496-499 (DTPG) is G3. GTP contacts are provided by residues 496-500 (DTPGH) and 550-553 (NKID). The G4 stretch occupies residues 550–553 (NKID). Positions 586 to 588 (SAQ) are G5.

This sequence belongs to the TRAFAC class translation factor GTPase superfamily. Classic translation factor GTPase family. IF-2 subfamily.

Its subcellular location is the cytoplasm. Its function is as follows. One of the essential components for the initiation of protein synthesis. Protects formylmethionyl-tRNA from spontaneous hydrolysis and promotes its binding to the 30S ribosomal subunits. Also involved in the hydrolysis of GTP during the formation of the 70S ribosomal complex. The polypeptide is Translation initiation factor IF-2 (Teredinibacter turnerae (strain ATCC 39867 / T7901)).